Reading from the N-terminus, the 23-residue chain is U1-ctenitoxin-Co1a (23 aa).

A disulfide bridge links cysteine 10 with cysteine 20.

As to expression, expressed by the venom gland.

It localises to the secreted. In terms of biological role, insecticidal neurotoxin that reversibly inhibits the N-methyl-D-aspartate (NMDA)-subtype of ionotropic glutamate receptor (GRIN) and inhibits inactivation of insect sodium channels (Nav). In vivo, is highly toxic to insects. This chain is U1-ctenitoxin-Co1a, found in Ctenus ornatus (Brazilian spider).